Here is a 123-residue protein sequence, read N- to C-terminus: MKLKVTVNGTAYDVDVDVDKSHENPMGTILFGGGTGGAPAPRAAGGAGAGKAGEGEIPAPLAGTVSKILVKEGDTVKAGQTVLVLEAMKMETEINAPTDGKVEKVLVKERDAVQGGQGLIKIG.

The region spanning 46–123 (GAGAGKAGEG…QGGQGLIKIG (78 aa)) is the Biotinyl-binding domain. Lys89 carries the post-translational modification N6-biotinyllysine.

In terms of assembly, transcarboxylase is composed of three subunits: 1.3S, 5S, and 12S. The core of the enzyme is composed of six 12S subunits. On each side of the core there are three pairs of 5S subunits. Each 5S dimer is attached to the core by two 1.3S subunits. Thus the total number of chains is 30 (6 + 12 + 12).

The catalysed reaction is (S)-methylmalonyl-CoA + pyruvate = propanoyl-CoA + oxaloacetate. Its function is as follows. The biotinyl 1.3S subunit serves as a carboxyl carrier between the substrate-binding sites on the 12S and 5S subunits. The sequence is that of Methylmalonyl-CoA carboxyltransferase 1.3S subunit from Propionibacterium freudenreichii subsp. shermanii.